The primary structure comprises 1844 residues: ATPase family AAA domain-containing protein 5 (1844 aa).

A Phosphoserine modification is found at serine 44. Lysine 127 is covalently cross-linked (Glycyl lysine isopeptide (Lys-Gly) (interchain with G-Cter in SUMO2)). The segment covering 178–199 (QPNTMTSLQNSKKVNPKQGTTK) has biased composition (polar residues). The tract at residues 178–204 (QPNTMTSLQNSKKVNPKQGTTKNDFKK) is disordered. Phosphoserine occurs at positions 219, 306, 311, 354, and 369. The tract at residues 368-384 (KSNVVIQEEELELAVLE) is interaction with WDR48. 3 disordered regions span residues 477 to 499 (KLKK…REGN), 580 to 623 (ESEA…NSQL), and 658 to 700 (KFTR…SKNI). Composition is skewed to polar residues over residues 580-592 (ESEA…STPK) and 599-608 (RISSTPTTET). Serine 602, serine 614, and serine 621 each carry phosphoserine. Residues 664–673 (TPKKSKKKSN) are compositionally biased toward basic residues. Polar residues predominate over residues 685 to 700 (GFTSQIRKASNTSKNI). Serine 817 carries the phosphoserine modification. 2 stretches are compositionally biased toward basic and acidic residues: residues 987–1032 (LEAD…ELSK) and 1092–1106 (RQNL…HEDF). 2 disordered regions span residues 987–1047 (LEAD…SKDS) and 1092–1118 (RQNL…SSDD). At serine 1116 the chain carries Phosphoserine. 1132-1139 (GPTGVGKT) serves as a coordination point for ATP. 2 disordered regions span residues 1203-1235 (KKIS…LPPK) and 1272-1292 (ITQT…GAEE). Residues 1272–1285 (ITQTKSTNATNSNV) are compositionally biased toward polar residues. The LXCXE motif motif lies at 1428–1432 (LVCSE). The interval 1591–1635 (SLSSVSSSSNAEESKTGDEESKARDKGNNPETKKSIPCPPKTTAG) is disordered. Positions 1602–1624 (EESKTGDEESKARDKGNNPETKK) are enriched in basic and acidic residues. The segment at 1630–1719 (PKTTAGKKCS…AAAEALSFTK (90 aa)) is interaction with RAD51 and RFC5.

Belongs to the AAA ATPase family. Component of a heteropentameric replication factor ATAD5 RFC-like complex composed of one large subunit (ATAD5) and four small subunits (RFC2, RFC3, RFC4 and RFC5). Within the ATAD5 RFC-like complex, interacts with RFC2, RFC4 and RFC5. Within the ATAD5 RFC-like complex, interacts directly via-N terminal with RAD51; the interactions is enhanced under replication stress. Interacts with RB1 predominantly in G1 phase via its LXCXE motif. Interacts with RAD9A in growing cells. The interaction with RAD9A is reduced after exposure to DNA replication-inhibiting agents. Interacts with BRD4. Interacts with PCNA. Interacts with deubiquitinating enzyme USP1, and its associated factor, WDR48. In terms of processing, ATR may stimulate the RAD9A dissociation.

The protein localises to the nucleus. In terms of biological role, has an important role in DNA replication and in maintaining genome integrity during replication stress. Involved in a RAD9A-related damage checkpoint, a pathway that is important in determining whether DNA damage is compatible with cell survival or whether it requires cell elimination by apoptosis. Modulates the RAD9A interaction with BCL2 and thereby induces DNA damage-induced apoptosis. Promotes PCNA deubiquitination by recruiting the ubiquitin-specific protease 1 (USP1) and WDR48 thereby down-regulating the error-prone damage bypass pathway. As component of the ATAD5 RFC-like complex, regulates the function of the DNA polymerase processivity factor PCNA by unloading the ring-shaped PCNA homotrimer from DNA after replication during the S phase of the cell cycle. This seems to be dependent on its ATPase activity. Plays important roles in restarting stalled replication forks under replication stress, by unloading the PCNA homotrimer from DNA and recruiting RAD51 possibly through an ATR-dependent manner. Ultimately this enables replication fork regression, breakage, and eventual fork restart. Both the PCNA unloading activity and the interaction with WDR48 are required to efficiently recruit RAD51 to stalled replication forks. Promotes the generation of MUS81-mediated single-stranded DNA-associated breaks in response to replication stress, which is an alternative pathway to restart stalled/regressed replication forks. This Homo sapiens (Human) protein is ATPase family AAA domain-containing protein 5.